The sequence spans 209 residues: Imidazole glycerol phosphate synthase subunit HisH (209 aa).

One can recognise a Glutamine amidotransferase type-1 domain in the interval 1–205 (MIAIIDYGMG…KGVVETWKSS (205 aa)). C79 functions as the Nucleophile in the catalytic mechanism. Active-site residues include H180 and E182.

As to quaternary structure, heterodimer of HisH and HisF.

Its subcellular location is the cytoplasm. The enzyme catalyses 5-[(5-phospho-1-deoxy-D-ribulos-1-ylimino)methylamino]-1-(5-phospho-beta-D-ribosyl)imidazole-4-carboxamide + L-glutamine = D-erythro-1-(imidazol-4-yl)glycerol 3-phosphate + 5-amino-1-(5-phospho-beta-D-ribosyl)imidazole-4-carboxamide + L-glutamate + H(+). The catalysed reaction is L-glutamine + H2O = L-glutamate + NH4(+). The protein operates within amino-acid biosynthesis; L-histidine biosynthesis; L-histidine from 5-phospho-alpha-D-ribose 1-diphosphate: step 5/9. Its function is as follows. IGPS catalyzes the conversion of PRFAR and glutamine to IGP, AICAR and glutamate. The HisH subunit catalyzes the hydrolysis of glutamine to glutamate and ammonia as part of the synthesis of IGP and AICAR. The resulting ammonia molecule is channeled to the active site of HisF. This chain is Imidazole glycerol phosphate synthase subunit HisH, found in Bacillus anthracis (strain CDC 684 / NRRL 3495).